A 264-amino-acid polypeptide reads, in one-letter code: Thymidylate synthase (264 aa).

A dUMP-binding site is contributed by arginine 21. Residue histidine 51 coordinates (6R)-5,10-methylene-5,6,7,8-tetrahydrofolate. Position 126-127 (126-127 (RR)) interacts with dUMP. Catalysis depends on cysteine 146, which acts as the Nucleophile. Residues 166–169 (RSAD), asparagine 177, and 207–209 (HIY) each bind dUMP. Aspartate 169 contacts (6R)-5,10-methylene-5,6,7,8-tetrahydrofolate. Residue serine 263 coordinates (6R)-5,10-methylene-5,6,7,8-tetrahydrofolate.

It belongs to the thymidylate synthase family. Bacterial-type ThyA subfamily. As to quaternary structure, homodimer.

It localises to the cytoplasm. The catalysed reaction is dUMP + (6R)-5,10-methylene-5,6,7,8-tetrahydrofolate = 7,8-dihydrofolate + dTMP. It functions in the pathway pyrimidine metabolism; dTTP biosynthesis. Catalyzes the reductive methylation of 2'-deoxyuridine-5'-monophosphate (dUMP) to 2'-deoxythymidine-5'-monophosphate (dTMP) while utilizing 5,10-methylenetetrahydrofolate (mTHF) as the methyl donor and reductant in the reaction, yielding dihydrofolate (DHF) as a by-product. This enzymatic reaction provides an intracellular de novo source of dTMP, an essential precursor for DNA biosynthesis. The sequence is that of Thymidylate synthase from Halalkalibacterium halodurans (strain ATCC BAA-125 / DSM 18197 / FERM 7344 / JCM 9153 / C-125) (Bacillus halodurans).